The sequence spans 516 residues: Cytochrome P450 6d1 (516 aa).

Cys461 is a binding site for heme.

It belongs to the cytochrome P450 family. Heme serves as cofactor.

It localises to the endoplasmic reticulum membrane. The protein resides in the microsome membrane. In terms of biological role, metabolizes pyrethroid insecticides and other xenobiotics. The sequence is that of Cytochrome P450 6d1 (CYP6D1) from Musca domestica (House fly).